Consider the following 149-residue polypeptide: Transcriptional repressor NrdR (149 aa).

A zinc finger lies at 3–34 (CPFCSATDTKVIDSRLVADGHQVRRRRECAEC). Positions 49–139 (PRVVKQDGSR…VYRAFEDVSE (91 aa)) constitute an ATP-cone domain.

Belongs to the NrdR family. Zn(2+) is required as a cofactor.

Functionally, negatively regulates transcription of bacterial ribonucleotide reductase nrd genes and operons by binding to NrdR-boxes. The protein is Transcriptional repressor NrdR of Shewanella woodyi (strain ATCC 51908 / MS32).